A 433-amino-acid polypeptide reads, in one-letter code: Dihydroorotase (433 aa).

Zn(2+)-binding residues include His-63 and His-65. Substrate contacts are provided by residues 65–67 (HLR) and Asn-97. 3 residues coordinate Zn(2+): Asp-155, His-182, and His-235. Residue Asn-283 participates in substrate binding. Asp-310 serves as a coordination point for Zn(2+). The active site involves Asp-310. His-314 contacts substrate.

Belongs to the metallo-dependent hydrolases superfamily. DHOase family. Class I DHOase subfamily. It depends on Zn(2+) as a cofactor.

The enzyme catalyses (S)-dihydroorotate + H2O = N-carbamoyl-L-aspartate + H(+). It functions in the pathway pyrimidine metabolism; UMP biosynthesis via de novo pathway; (S)-dihydroorotate from bicarbonate: step 3/3. Its function is as follows. Catalyzes the reversible cyclization of carbamoyl aspartate to dihydroorotate. In Anaeromyxobacter dehalogenans (strain 2CP-1 / ATCC BAA-258), this protein is Dihydroorotase.